The following is a 537-amino-acid chain: Glutamyl-tRNA(Gln) amidotransferase subunit B, chloroplastic/mitochondrial (537 aa).

It belongs to the GatB/GatE family. GatB subfamily. Subunit of the heterotrimeric GatCAB amidotransferase (AdT) complex, composed of A, B and C subunits.

It is found in the mitochondrion. It localises to the plastid. The protein localises to the chloroplast. It catalyses the reaction L-glutamyl-tRNA(Gln) + L-glutamine + ATP + H2O = L-glutaminyl-tRNA(Gln) + L-glutamate + ADP + phosphate + H(+). In terms of biological role, allows the formation of correctly charged Gln-tRNA(Gln) through the transamidation of misacylated Glu-tRNA(Gln) in chloroplasts and mitochondria. The reaction takes place in the presence of glutamine and ATP through an activated gamma-phospho-Glu-tRNA(Gln). This is Glutamyl-tRNA(Gln) amidotransferase subunit B, chloroplastic/mitochondrial from Ostreococcus tauri.